The primary structure comprises 1373 residues: TAL effector protein PthXo1 (1373 aa).

Disordered stretches follow at residues 1–68 (MDPI…SAGS) and 127–152 (AARP…PAAQ). Basic residues predominate over residues 131–141 (PRAKPAPRRRA). A compositionally biased stretch (low complexity) spans 142-152 (AQPSDASPAAQ). A Cryptic repeat -1 repeat occupies 221-239 (THEDIVGVGKQWSGARALE). The Cryptic repeat 0 repeat unit spans residues 256–273 (DTGQLVKIAKRGGVTAVE). Core repeat repeat units lie at residues 289-322 (LTPA…QAHG), 323-356 (LTPA…QAHG), 357-390 (LPPD…QAHG), 391-424 (LTPD…QAHG), 425-458 (LTPD…QAHG), 459-492 (LTPD…QAHG), 493-525 (LTPD…QAHG), 526-559 (LTPD…QTHG), 560-593 (LTPA…QAHG), 594-627 (LTPD…QAHG), 628-661 (LTPD…QAHG), 662-695 (LTPD…QAHG), 696-729 (LTQV…QAHG), 730-763 (LTPA…QAHG), 764-797 (LTPD…QAHG), 798-831 (LTQE…QAHG), 832-865 (LTPD…QAHG), 866-899 (LTPA…QDHG), 900-933 (LTLA…QAHG), 934-967 (LTQD…QDHG), 968-1001 (LTPD…QDHG), 1002-1034 (LTLD…QDHG), and 1035-1068 (LTPD…QDHG). 4 HEAT repeats span residues 714–760 (LETV…VLCQ), 782–828 (LETV…VLCQ), 850–893 (LETV…LLPV), and 918–961 (LETV…LLPV). The stretch at 1053–1091 (LETVQRLLPVLCQDHGLTPNQVVAIASNGGKQALESIVA) is one HEAT 5 repeat. One copy of the Core repeat 23.5 repeat lies at 1069-1087 (LTPNQVVAIASNGGKQALE). The acidic activation domain stretch occupies residues 1136–1364 (RVNRRIGERT…ELAWLMELLP (229 aa)). Residues 1222 to 1225 (KRAK) carry the Nuclear localization signal NLS1 motif. Residues 1250 to 1286 (LDAPSPMHEGDQTGASSRKRSRSDRAVTGPSAQHSFE) are disordered. Positions 1268–1271 (KRSR) match the Nuclear localization signal NLS2 motif. Residues 1305-1308 (KRPR) carry the Nuclear localization signal NLS3 motif.

It belongs to the transcription activator-like effector (TALE) family.

Its subcellular location is the secreted. It is found in the host nucleus. In terms of biological role, avirulence protein. Acts as a transcription factor in rice, inducing expression of a number of host genes including SWEET11 (Os8N3, XA13, AC Q6YZF3) in susceptible plants with the Xa13 allele. Plants with the xa13 allele, which has an altered promoter, are resistant to bacterial blight caused by this bacterial strain and do not induce SWEET11. The xa13 allele elicits an atypical hypersensitive response (HR). PthXo1 binds SWEET11 promoter DNA in a sequence-specific manner. In Xanthomonas oryzae pv. oryzae (strain PXO99A), this protein is TAL effector protein PthXo1 (pthXo1).